A 256-amino-acid chain; its full sequence is Small ribosomal subunit protein eS1 (256 aa).

A compositionally biased stretch (basic residues) spans 1–18; the sequence is MAVGKNKRLSKGKKGVKK. The tract at residues 1–21 is disordered; that stretch reads MAVGKNKRLSKGKKGVKKRTV. The residue at position 2 (Ala2) is an N-acetylalanine; partial.

Belongs to the eukaryotic ribosomal protein eS1 family. As to quaternary structure, component of the small ribosomal subunit. Mature ribosomes consist of a small (40S) and a large (60S) subunit. The 40S subunit contains about 33 different proteins and 1 molecule of RNA (18S). The 60S subunit contains about 49 different proteins and 3 molecules of RNA (25S, 5.8S and 5S).

It localises to the cytoplasm. The polypeptide is Small ribosomal subunit protein eS1 (rps1) (Neosartorya fischeri (strain ATCC 1020 / DSM 3700 / CBS 544.65 / FGSC A1164 / JCM 1740 / NRRL 181 / WB 181) (Aspergillus fischerianus)).